We begin with the raw amino-acid sequence, 401 residues long: Probable sodium/metabolite cotransporter BASS1, chloroplastic (401 aa).

The transit peptide at 1–70 directs the protein to the chloroplast; that stretch reads MASAISLSLL…RRSRFDFVPR (70 aa). 9 helical membrane-spanning segments follow: residues 92–112, 122–142, 156–176, 187–207, 212–232, 247–267, 278–298, 311–331, and 371–391; these read FVGE…CLLG, VTPN…GMTL, ELFA…FFVS, AGLI…VTYI, VALS…MTPL, LGLL…GAFL, VSPV…GYAI, QVVL…YLFS, and VPCA…AGIW.

It belongs to the bile acid:sodium symporter (BASS) (TC 2.A.28) family.

It is found in the membrane. The protein resides in the plastid. Its subcellular location is the chloroplast envelope. Its function is as follows. May function as sodium-coupled metabolite transporter across the chloroplast envelope. The protein is Probable sodium/metabolite cotransporter BASS1, chloroplastic (BASS1) of Arabidopsis thaliana (Mouse-ear cress).